Here is a 246-residue protein sequence, read N- to C-terminus: tRNA (guanine-N(1)-)-methyltransferase (246 aa).

S-adenosyl-L-methionine-binding positions include glycine 112 and 131 to 136; that span reads IGDYVL.

This sequence belongs to the RNA methyltransferase TrmD family. In terms of assembly, homodimer.

The protein localises to the cytoplasm. The enzyme catalyses guanosine(37) in tRNA + S-adenosyl-L-methionine = N(1)-methylguanosine(37) in tRNA + S-adenosyl-L-homocysteine + H(+). In terms of biological role, specifically methylates guanosine-37 in various tRNAs. In Thermosipho africanus (strain TCF52B), this protein is tRNA (guanine-N(1)-)-methyltransferase.